A 41-amino-acid chain; its full sequence is Disintegrin obtustatin (41 aa).

4 cysteine pairs are disulfide-bonded: cysteine 1–cysteine 10, cysteine 6–cysteine 29, cysteine 7–cysteine 34, and cysteine 19–cysteine 36. Positions 1-41 constitute a Disintegrin domain; it reads CTTGPCCRQCKLKPAGTTCWKTSLTSHYCTGKSCDCPLYPG. The Cell attachment site; atypical (KTS) signature appears at 21 to 23; sequence KTS.

It belongs to the disintegrin family. Short disintegrin subfamily. As to quaternary structure, monomer. As to expression, expressed by the venom gland.

It localises to the secreted. In terms of biological role, is a potent and selective inhibitor of alpha-1/beta-1 (ITGA1/ITGB1) integrin. It blocks the adhesion of alpha-1/beta-1-expressing K562 cells to immobilized collagens IV and I with IC(50) of 2 and 0.5 nM, respectively. Potently inhibits angiogenesis in chicken and in mouse model and reduces tumor development by half. Is 25-fold less potent than viperistatin. The protein is Disintegrin obtustatin of Macrovipera lebetina obtusa (Levant blunt-nosed viper).